A 224-amino-acid polypeptide reads, in one-letter code: dTDP-fucosamine acetyltransferase (224 aa).

Positions P94–R224 constitute an N-acetyltransferase domain. Acetyl-CoA-binding positions include L168–G174, N201, and R207. Y208 functions as the Proton donor in the catalytic mechanism.

Belongs to the WecD family. In terms of assembly, homodimer.

It catalyses the reaction dTDP-4-amino-4,6-dideoxy-alpha-D-galactose + acetyl-CoA = dTDP-4-acetamido-4,6-dideoxy-alpha-D-galactose + CoA + H(+). Its pathway is bacterial outer membrane biogenesis; enterobacterial common antigen biosynthesis. In terms of biological role, catalyzes the acetylation of dTDP-fucosamine (dTDP-4-amino-4,6-dideoxy-D-galactose) to dTDP-Fuc4NAc, which is utilized in the biosynthesis of the enterobacterial common antigen (ECA). This is dTDP-fucosamine acetyltransferase from Escherichia coli O6:H1 (strain CFT073 / ATCC 700928 / UPEC).